The chain runs to 159 residues: Transcription elongation factor GreA (159 aa).

Residues 3–37 (TNKEVVLTYEGLQKLEQELENLKTVKRREVAERIK) are a coiled coil.

It belongs to the GreA/GreB family.

Functionally, necessary for efficient RNA polymerase transcription elongation past template-encoded arresting sites. The arresting sites in DNA have the property of trapping a certain fraction of elongating RNA polymerases that pass through, resulting in locked ternary complexes. Cleavage of the nascent transcript by cleavage factors such as GreA or GreB allows the resumption of elongation from the new 3'terminus. GreA releases sequences of 2 to 3 nucleotides. The chain is Transcription elongation factor GreA from Acetivibrio thermocellus (strain ATCC 27405 / DSM 1237 / JCM 9322 / NBRC 103400 / NCIMB 10682 / NRRL B-4536 / VPI 7372) (Clostridium thermocellum).